We begin with the raw amino-acid sequence, 755 residues long: Polyribonucleotide nucleotidyltransferase (755 aa).

Asp482 and Asp488 together coordinate Mg(2+). The KH domain occupies Pro549–Met608. Residues Gly618 to Arg686 enclose the S1 motif domain. Residues Asn702–Tyr714 are compositionally biased toward basic and acidic residues. The disordered stretch occupies residues Asn702 to Tyr755. Basic residues predominate over residues Lys722–His731.

Belongs to the polyribonucleotide nucleotidyltransferase family. Mg(2+) is required as a cofactor.

It localises to the cytoplasm. It catalyses the reaction RNA(n+1) + phosphate = RNA(n) + a ribonucleoside 5'-diphosphate. Involved in mRNA degradation. Catalyzes the phosphorolysis of single-stranded polyribonucleotides processively in the 3'- to 5'-direction. This is Polyribonucleotide nucleotidyltransferase from Wolbachia sp. subsp. Brugia malayi (strain TRS).